An 83-amino-acid polypeptide reads, in one-letter code: MAHKKGAGSTKNGRDSNAKRLGVKRFGGEQVTAGNILIRQRGTKFKPGINVGCGKDFTLFALTNGIVKFDYANGTQKCINIID.

The disordered stretch occupies residues 1 to 21 (MAHKKGAGSTKNGRDSNAKRL).

Belongs to the bacterial ribosomal protein bL27 family.

The protein resides in the plastid. It is found in the chloroplast. The sequence is that of Large ribosomal subunit protein bL27c from Phaeodactylum tricornutum (strain CCAP 1055/1).